The sequence spans 227 residues: Esterase OVCA2 (227 aa).

Catalysis depends on charge relay system residues Ser119, Asp179, and His206.

It belongs to the LovG family.

It catalyses the reaction a carboxylic ester + H2O = an alcohol + a carboxylate + H(+). Functionally, exhibits ester hydrolase activity with a strong preference for long-chain alkyl ester substrates and high selectivity against a variety of short, branched, and substituted esters. Is able to hydrolyze ester bonds within a wide range of p-nitrophenyl derivatives (C2-C14) in vitro, with a strong preference toward substrates of &gt;8 carbons. The protein is Esterase OVCA2 (OVCA2) of Bos taurus (Bovine).